The chain runs to 295 residues: 4-hydroxy-tetrahydrodipicolinate synthase (295 aa).

T48 contributes to the pyruvate binding site. Y135 functions as the Proton donor/acceptor in the catalytic mechanism. The Schiff-base intermediate with substrate role is filled by K163. V204 lines the pyruvate pocket.

This sequence belongs to the DapA family. In terms of assembly, homotetramer; dimer of dimers.

The protein resides in the cytoplasm. It catalyses the reaction L-aspartate 4-semialdehyde + pyruvate = (2S,4S)-4-hydroxy-2,3,4,5-tetrahydrodipicolinate + H2O + H(+). Its pathway is amino-acid biosynthesis; L-lysine biosynthesis via DAP pathway; (S)-tetrahydrodipicolinate from L-aspartate: step 3/4. Its function is as follows. Catalyzes the condensation of (S)-aspartate-beta-semialdehyde [(S)-ASA] and pyruvate to 4-hydroxy-tetrahydrodipicolinate (HTPA). The polypeptide is 4-hydroxy-tetrahydrodipicolinate synthase (Francisella tularensis subsp. novicida (strain U112)).